A 499-amino-acid polypeptide reads, in one-letter code: Proline--tRNA ligase (499 aa).

This sequence belongs to the class-II aminoacyl-tRNA synthetase family. ProS type 3 subfamily. As to quaternary structure, homodimer.

The protein resides in the cytoplasm. The enzyme catalyses tRNA(Pro) + L-proline + ATP = L-prolyl-tRNA(Pro) + AMP + diphosphate. Catalyzes the attachment of proline to tRNA(Pro) in a two-step reaction: proline is first activated by ATP to form Pro-AMP and then transferred to the acceptor end of tRNA(Pro). This is Proline--tRNA ligase from Bdellovibrio bacteriovorus (strain ATCC 15356 / DSM 50701 / NCIMB 9529 / HD100).